A 126-amino-acid polypeptide reads, in one-letter code: Holo-[acyl-carrier-protein] synthase (126 aa).

Asp9 and Glu58 together coordinate Mg(2+).

This sequence belongs to the P-Pant transferase superfamily. AcpS family. Requires Mg(2+) as cofactor.

Its subcellular location is the cytoplasm. It carries out the reaction apo-[ACP] + CoA = holo-[ACP] + adenosine 3',5'-bisphosphate + H(+). In terms of biological role, transfers the 4'-phosphopantetheine moiety from coenzyme A to a Ser of acyl-carrier-protein. This chain is Holo-[acyl-carrier-protein] synthase, found in Sodalis glossinidius (strain morsitans).